Reading from the N-terminus, the 97-residue chain is MQVLVRDNNVDQALRVLKKKMQREGIFREMKQRKAYEKPSVRKAREKAEAVRRARKQARKTAIREGLIAAPKPKPRAVAPRRPAAAPAPASSPTTTA.

The tract at residues 37 to 97 (EKPSVRKARE…APASSPTTTA (61 aa)) is disordered. Low complexity predominate over residues 76 to 97 (RAVAPRRPAAAPAPASSPTTTA).

The protein belongs to the bacterial ribosomal protein bS21 family.

The polypeptide is Small ribosomal subunit protein bS21 (Methylobacterium sp. (strain 4-46)).